The chain runs to 311 residues: Putative ribose-phosphate pyrophosphokinase 2 (311 aa).

ATP contacts are provided by residues 38–40 and 97–98; these read DGE and RQ. Mg(2+)-binding residues include His131 and Asp171. D-ribose 5-phosphate is bound at residue Asp219.

This sequence belongs to the ribose-phosphate pyrophosphokinase family. Class I subfamily. In terms of assembly, homohexamer. Mg(2+) serves as cofactor.

It is found in the cytoplasm. The enzyme catalyses D-ribose 5-phosphate + ATP = 5-phospho-alpha-D-ribose 1-diphosphate + AMP + H(+). It functions in the pathway metabolic intermediate biosynthesis; 5-phospho-alpha-D-ribose 1-diphosphate biosynthesis; 5-phospho-alpha-D-ribose 1-diphosphate from D-ribose 5-phosphate (route I): step 1/1. Its function is as follows. Involved in the biosynthesis of the central metabolite phospho-alpha-D-ribosyl-1-pyrophosphate (PRPP) via the transfer of pyrophosphoryl group from ATP to 1-hydroxyl of ribose-5-phosphate (Rib-5-P). The chain is Putative ribose-phosphate pyrophosphokinase 2 from Listeria innocua serovar 6a (strain ATCC BAA-680 / CLIP 11262).